The chain runs to 430 residues: MFQTFVRFFTTKEVRNKIFFTLAMLVIFKIGTYIPAPGVNPEAFNHPQGSQGATELLNTFGGGALKRFSIFAMGIMPYITASIVMQLLQMDIVPKFTEWAKQGEMGRRKINNVTRYFAIILAFIQSIGMAFQFNNYLKGQLIIEKSVMSYLLIAVVLTAGTAFLIWLGDQITQFGVGNGISLIIFAGILSTLPSSLEQFAQSVFVGQDDTSLAWLKILGLIVALILLTVGAIFVLEAKRKIPIQYAKKQSAQRLGSQATYLPLKVNSAGVIPVIFAMAFFLLPRTLTLFFPKAEWAQNIADTANPSSNIGMIIYVVLIIAFAYFYAFVQVNPEKMADNLKKQGSYVPGIRPGEQTKKYITKVLYRLTFVGSIFLAAIAILPIIATKFMGLPQSIQIGGTSLLIVIGVAIETMKTLEAQVTQKEYKGFGGR.

A run of 10 helical transmembrane segments spans residues 18 to 38 (IFFTLAMLVIFKIGTYIPAPG), 68 to 88 (FSIFAMGIMPYITASIVMQLL), 117 to 137 (FAIILAFIQSIGMAFQFNNYL), 147 to 167 (VMSYLLIAVVLTAGTAFLIWL), 174 to 194 (FGVGNGISLIIFAGILSTLPS), 217 to 237 (ILGLIVALILLTVGAIFVLEA), 270 to 290 (VIPVIFAMAFFLLPRTLTLFF), 308 to 328 (NIGMIIYVVLIIAFAYFYAFV), 368 to 388 (FVGSIFLAAIAILPIIATKFM), and 389 to 409 (GLPQSIQIGGTSLLIVIGVAI).

The protein belongs to the SecY/SEC61-alpha family. As to quaternary structure, component of the Sec protein translocase complex. Heterotrimer consisting of SecY, SecE and SecG subunits. The heterotrimers can form oligomers, although 1 heterotrimer is thought to be able to translocate proteins. Interacts with the ribosome. Interacts with SecDF, and other proteins may be involved. Interacts with SecA.

The protein localises to the cell membrane. Functionally, the central subunit of the protein translocation channel SecYEG. Consists of two halves formed by TMs 1-5 and 6-10. These two domains form a lateral gate at the front which open onto the bilayer between TMs 2 and 7, and are clamped together by SecE at the back. The channel is closed by both a pore ring composed of hydrophobic SecY resides and a short helix (helix 2A) on the extracellular side of the membrane which forms a plug. The plug probably moves laterally to allow the channel to open. The ring and the pore may move independently. The sequence is that of Protein translocase subunit SecY from Staphylococcus epidermidis (strain ATCC 35984 / DSM 28319 / BCRC 17069 / CCUG 31568 / BM 3577 / RP62A).